The following is a 292-amino-acid chain: Probable vesicular-fusion protein sec17 homolog (292 aa).

It belongs to the SNAP family.

The protein localises to the membrane. Its function is as follows. Required for vesicular transport between the endoplasmic reticulum and the Golgi apparatus. This chain is Probable vesicular-fusion protein sec17 homolog, found in Neurospora crassa (strain ATCC 24698 / 74-OR23-1A / CBS 708.71 / DSM 1257 / FGSC 987).